We begin with the raw amino-acid sequence, 281 residues long: Pantothenate synthetase (281 aa).

An ATP-binding site is contributed by 30 to 37 (MGYLHEGH). His37 (proton donor) is an active-site residue. Gln61 contributes to the (R)-pantoate binding site. Beta-alanine is bound at residue Gln61. Position 147 to 150 (147 to 150 (GEKD)) interacts with ATP. Gln153 provides a ligand contact to (R)-pantoate. ATP-binding positions include Val176 and 184–187 (MSSR).

Belongs to the pantothenate synthetase family. Homodimer.

It localises to the cytoplasm. The catalysed reaction is (R)-pantoate + beta-alanine + ATP = (R)-pantothenate + AMP + diphosphate + H(+). It participates in cofactor biosynthesis; (R)-pantothenate biosynthesis; (R)-pantothenate from (R)-pantoate and beta-alanine: step 1/1. Its function is as follows. Catalyzes the condensation of pantoate with beta-alanine in an ATP-dependent reaction via a pantoyl-adenylate intermediate. This is Pantothenate synthetase from Desulfatibacillum aliphaticivorans.